The following is a 380-amino-acid chain: WAT1-related protein At2g37460 (380 aa).

The next 10 membrane-spanning stretches (helical) occupy residues 16-36 (FISMVVLQVGLAGMDILSKAV), 45-65 (VLVVYRHAVATIVMAPFAFYF), 71-91 (PKMTLMIFFKISLLGLLEPVI), 107-127 (FATAMYNVLPAITFVLAYIFG), 142-162 (VVGTLATVGGAMIMTLVKGPV), 187-207 (GAVLVTIGCFSYACFMILQAI), 216-236 (LSLTAWICLMGTIEGTAVALV), 254-274 (LTATYSGIVCSALAYYVGGVV), 282-302 (FVTAFSPLCMIIVAIMSTIIF), and 306-326 (MYLGRVLGAVVICAGLYLVIW). Residues 27–134 (AGMDILSKAV…IFGLERVKLR (108 aa)) form the EamA 1 domain. One can recognise an EamA 2 domain in the interval 196–325 (FSYACFMILQ…VICAGLYLVI (130 aa)).

This sequence belongs to the drug/metabolite transporter (DMT) superfamily. Plant drug/metabolite exporter (P-DME) (TC 2.A.7.4) family.

The protein resides in the membrane. The polypeptide is WAT1-related protein At2g37460 (Arabidopsis thaliana (Mouse-ear cress)).